The primary structure comprises 218 residues: Embryonic polyadenylate-binding protein 2-B (218 aa).

2 disordered regions span residues 1 to 24 (MSER…ELDD) and 169 to 218 (RTNM…NNPY). The region spanning 93-170 (RSVYVGNVDY…RTIKVLPKRT (78 aa)) is the RRM domain. The segment covering 198–209 (QRPRGRPFRGRG) has biased composition (basic residues).

Homodimer; Upon poly(A) binding, undergoes a dimer-monomer transition that removes the polyproline motif from the RNA recognition site and allows it to be replaced by the adenosine nucleotides of poly(A).

The protein resides in the cytoplasm. In terms of biological role, binds the poly(A) tail of mRNA. Unable to interact with the cap-binding complex and is therefore unlikely to be involved in translation initiation. The chain is Embryonic polyadenylate-binding protein 2-B (Pabpn1l-b) from Xenopus laevis (African clawed frog).